The primary structure comprises 97 residues: MKFYVVALALLVAFVCIAESRSVETERAVDADLEDDLDDLEEYLEGIAEALELEDFPDTEEARGETFDKLKEKLKTFYQKLVEKAEDLKGDLKAKLS.

The first 22 residues, 1–22 (MKFYVVALALLVAFVCIAESRS), serve as a signal peptide directing secretion. Positions 23–63 (VETERAVDADLEDDLDDLEEYLEGIAEALELEDFPDTEEAR) are excised as a propeptide. The short motif at 60-63 (EEAR) is the Processing quadruplet motif element.

Post-translationally, cleavage of the propeptide depends on the processing quadruplet motif (XXXR, with at least one of X being E). Expressed by the venom gland.

It is found in the secreted. Functionally, does not have antimicrobial or antifungal activity. Does not have hemolytic activity against rabbit erythrocytes. However, it causes some conductance changes in planar bilayer membranes, without membrane rupture, suggesting a cytolytic function on other biological targets. It causes paralysis, but is not lethal when injected into insect (M.domestica) larvae. The sequence is that of M-zodatoxin-Lt7a from Lachesana tarabaevi (Spider).